Here is a 253-residue protein sequence, read N- to C-terminus: Phosphonates import ATP-binding protein PhnC (253 aa).

In terms of domain architecture, ABC transporter spans 4-247 (VRFEGVTKRF…QAVAMIYRAG (244 aa)). 36–43 (GLSGSGKS) serves as a coordination point for ATP.

Belongs to the ABC transporter superfamily. Phosphonates importer (TC 3.A.1.9.1) family. In terms of assembly, the complex is composed of two ATP-binding proteins (PhnC), two transmembrane proteins (PhnE) and a solute-binding protein (PhnD).

Its subcellular location is the cell membrane. The catalysed reaction is phosphonate(out) + ATP + H2O = phosphonate(in) + ADP + phosphate + H(+). In terms of biological role, part of the ABC transporter complex PhnCDE involved in phosphonates import. Responsible for energy coupling to the transport system. The polypeptide is Phosphonates import ATP-binding protein PhnC (Frankia casuarinae (strain DSM 45818 / CECT 9043 / HFP020203 / CcI3)).